A 332-amino-acid chain; its full sequence is L-lactate dehydrogenase A chain (332 aa).

Residues 29–57 and R99 each bind NAD(+); that span reads GAVGMACAISILMKDLADELALVDVIEDK. 3 residues coordinate substrate: R106, N138, and R169. N138 provides a ligand contact to NAD(+). The active-site Proton acceptor is the H193. T248 is a substrate binding site.

It belongs to the LDH/MDH superfamily. LDH family. As to quaternary structure, homotetramer.

The protein resides in the cytoplasm. It carries out the reaction (S)-lactate + NAD(+) = pyruvate + NADH + H(+). It functions in the pathway fermentation; pyruvate fermentation to lactate; (S)-lactate from pyruvate: step 1/1. Its function is as follows. Interconverts simultaneously and stereospecifically pyruvate and lactate with concomitant interconversion of NADH and NAD(+). The sequence is that of L-lactate dehydrogenase A chain (LDHA) from Trachemys scripta elegans (Red-eared slider turtle).